The sequence spans 171 residues: Envelope glycoprotein N (171 aa).

Residues 1 to 132 (MARINSNSGT…CSALKYRIYV (132 aa)) are Virion surface-facing. Residues 133–153 (SSFVSVLNIILYVLLFLASVV) traverse the membrane as a helical segment. Residues 154–171 (YIRYLCHQSITTETVKDY) are Intravirion-facing.

Belongs to the herpesviridae glycoprotein N family. Interacts (via N-terminus) with gM (via N-terminus). The gM-gN heterodimer forms the gCII complex.

It is found in the virion membrane. Its subcellular location is the host membrane. The protein localises to the host Golgi apparatus. It localises to the host trans-Golgi network. Its function is as follows. Envelope glycoprotein necessary for proper maturation of gM and modulation of its membrane fusion activity. Also plays a critical role in virion morphogenesis. The sequence is that of Envelope glycoprotein N from Elephas maximus (Indian elephant).